A 194-amino-acid chain; its full sequence is Ribosomal RNA small subunit methyltransferase G (194 aa).

Residues G70, Y75, 121-122 (VE), and R135 contribute to the S-adenosyl-L-methionine site.

Belongs to the methyltransferase superfamily. RNA methyltransferase RsmG family.

It is found in the cytoplasm. The enzyme catalyses guanosine(527) in 16S rRNA + S-adenosyl-L-methionine = N(7)-methylguanosine(527) in 16S rRNA + S-adenosyl-L-homocysteine. Functionally, specifically methylates the N7 position of guanine in position 527 of 16S rRNA. The protein is Ribosomal RNA small subunit methyltransferase G of Aliarcobacter butzleri (strain RM4018) (Arcobacter butzleri).